Here is a 106-residue protein sequence, read N- to C-terminus: ATP-dependent Clp protease adapter protein ClpS (106 aa).

The protein belongs to the ClpS family. As to quaternary structure, binds to the N-terminal domain of the chaperone ClpA.

Its function is as follows. Involved in the modulation of the specificity of the ClpAP-mediated ATP-dependent protein degradation. This is ATP-dependent Clp protease adapter protein ClpS from Methylococcus capsulatus (strain ATCC 33009 / NCIMB 11132 / Bath).